Reading from the N-terminus, the 565-residue chain is Membrane protein insertase YidC (565 aa).

A run of 6 helical transmembrane segments spans residues 6 to 26 (VLLI…WGKN), 348 to 368 (LMAL…SLLH), 370 to 390 (WGWA…PLSA), 437 to 457 (GGCF…WVLV), 479 to 499 (PYFI…KLTP), and 516 to 536 (PLIF…YWVI).

Belongs to the OXA1/ALB3/YidC family. Type 1 subfamily. As to quaternary structure, interacts with the Sec translocase complex via SecD. Specifically interacts with transmembrane segments of nascent integral membrane proteins during membrane integration.

It is found in the cell inner membrane. Its function is as follows. Required for the insertion and/or proper folding and/or complex formation of integral membrane proteins into the membrane. Involved in integration of membrane proteins that insert both dependently and independently of the Sec translocase complex, as well as at least some lipoproteins. Aids folding of multispanning membrane proteins. This is Membrane protein insertase YidC from Xylella fastidiosa (strain 9a5c).